The sequence spans 319 residues: Ankyrin repeat domain-containing protein 1 (319 aa).

Residues 55 to 89 (LGEEQRKSEKVREAELKKKKLEQRSKLENLEDLEI) are a coiled coil. ANK repeat units lie at residues 152–181 (YKRT…QIEF), 185–214 (LEST…KISA), 218–247 (LLST…DLNA), 251–280 (EGDT…DLNV), and 284–315 (AGKT…KNSR).

In terms of assembly, interacts with TTN/titin. Interacts with YBX1. As to expression, expressed in heart, cardiac muscle.

The protein resides in the nucleus. May play an important role in endothelial cell activation. May act as a nuclear transcription factor that negatively regulates the expression of cardiac genes. In Rattus norvegicus (Rat), this protein is Ankyrin repeat domain-containing protein 1 (Ankrd1).